Consider the following 240-residue polypeptide: Thiopurine S-methyltransferase (240 aa).

Position 24-35 (24-35 (WQDKWVTRHIAF)) interacts with S-adenosyl-L-methionine. Position 35 (F35) interacts with substrate. The residue at position 53 (K53) is an N6-acetyllysine. S-adenosyl-L-methionine-binding positions include L64, E85, 129–130 (SI), and R147.

The protein belongs to the class I-like SAM-binding methyltransferase superfamily. TPMT family. As to quaternary structure, monomer.

It is found in the cytoplasm. The enzyme catalyses S-adenosyl-L-methionine + a thiopurine = S-adenosyl-L-homocysteine + a thiopurine S-methylether.. The catalysed reaction is mercaptopurine + S-adenosyl-L-methionine = 6-methylthiopurine + S-adenosyl-L-homocysteine + H(+). Functionally, catalyzes the S-methylation of thiopurine drugs such as 6-mercaptopurine (also called mercaptopurine, 6-MP or its brand name Purinethol) using S-adenosyl-L-methionine as the methyl donor. TPMT activity modulates the cytotoxic effects of thiopurine prodrugs. A natural substrate for this enzyme has yet to be identified. This is Thiopurine S-methyltransferase (Tpmt) from Rattus norvegicus (Rat).